A 184-amino-acid chain; its full sequence is Ribosome maturation factor RimM (184 aa).

A PRC barrel domain is found at aspartate 111–tyrosine 184.

It belongs to the RimM family. In terms of assembly, binds ribosomal protein uS19.

It is found in the cytoplasm. Functionally, an accessory protein needed during the final step in the assembly of 30S ribosomal subunit, possibly for assembly of the head region. Essential for efficient processing of 16S rRNA. May be needed both before and after RbfA during the maturation of 16S rRNA. It has affinity for free ribosomal 30S subunits but not for 70S ribosomes. This is Ribosome maturation factor RimM from Ralstonia nicotianae (strain ATCC BAA-1114 / GMI1000) (Ralstonia solanacearum).